The following is a 508-amino-acid chain: Photosystem II CP47 reaction center protein (508 aa).

6 helical membrane passes run 21-36 (SVHI…WAGS), 101-115 (IVFS…IWHW), 140-156 (GIHL…FGVF), 203-218 (IAAG…FHLS), 237-252 (VLSS…AFVV), and 457-472 (SFAL…HGAR).

The protein belongs to the PsbB/PsbC family. PsbB subfamily. As to quaternary structure, PSII is composed of 1 copy each of membrane proteins PsbA, PsbB, PsbC, PsbD, PsbE, PsbF, PsbH, PsbI, PsbJ, PsbK, PsbL, PsbM, PsbT, PsbX, PsbY, PsbZ, Psb30/Ycf12, at least 3 peripheral proteins of the oxygen-evolving complex and a large number of cofactors. It forms dimeric complexes. It depends on Binds multiple chlorophylls. PSII binds additional chlorophylls, carotenoids and specific lipids. as a cofactor.

The protein resides in the plastid. It localises to the chloroplast thylakoid membrane. One of the components of the core complex of photosystem II (PSII). It binds chlorophyll and helps catalyze the primary light-induced photochemical processes of PSII. PSII is a light-driven water:plastoquinone oxidoreductase, using light energy to abstract electrons from H(2)O, generating O(2) and a proton gradient subsequently used for ATP formation. This is Photosystem II CP47 reaction center protein from Jasminum nudiflorum (Winter jasmine).